The sequence spans 333 residues: D-fructose 1,6-bisphosphatase class 2/sedoheptulose 1,7-bisphosphatase (333 aa).

The Mn(2+) site is built by Asp-33, Glu-57, Asp-85, and Glu-88. Substrate contacts are provided by residues Glu-88 to Thr-90, Tyr-119, Arg-164 to Arg-166, and Asp-186 to Asp-188. Residue Glu-213 coordinates Mn(2+).

Belongs to the FBPase class 2 family. As to quaternary structure, homotetramer. Mn(2+) serves as cofactor.

The enzyme catalyses beta-D-fructose 1,6-bisphosphate + H2O = beta-D-fructose 6-phosphate + phosphate. It catalyses the reaction D-sedoheptulose 1,7-bisphosphate + H2O = D-sedoheptulose 7-phosphate + phosphate. Its pathway is carbohydrate biosynthesis; Calvin cycle. Catalyzes the hydrolysis of fructose 1,6-bisphosphate (Fru 1,6-P2) and sedoheptulose 1,7-bisphosphate (Sed 1,7-P2) to fructose 6-phosphate and sedoheptulose 7-phosphate, respectively. This Prochlorococcus marinus (strain AS9601) protein is D-fructose 1,6-bisphosphatase class 2/sedoheptulose 1,7-bisphosphatase.